We begin with the raw amino-acid sequence, 356 residues long: Viral cathepsin (356 aa).

A signal peptide spans 1–40 (MYANALVCLNPSFIKLQFHIVCTMNIIGIVTLALCSAASA). Positions 41–144 (ADEGAAYNLQ…IILNQPPDKG (104 aa)) are cleaved as a propeptide — activation peptide. Intrachain disulfides connect cysteine 165/cysteine 206, cysteine 199/cysteine 239, and cysteine 295/cysteine 343. The active site involves cysteine 168. Active-site residues include histidine 302 and asparagine 322.

This sequence belongs to the peptidase C1 family. Synthesized as an inactive proenzyme and activated by proteolytic removal of the inhibitory propeptide.

The catalysed reaction is Endopeptidase of broad specificity, hydrolyzing substrates of both cathepsin L and cathepsin B.. Functionally, cysteine protease that plays an essential role in host liquefaction to facilitate horizontal transmission of the virus. May participate in the degradation of foreign protein expressed by the baculovirus system. In Lepidoptera (butterflies and moths), this protein is Viral cathepsin (VCATH).